The following is a 275-amino-acid chain: Large ribosomal subunit protein uL2 (275 aa).

The disordered stretch occupies residues 222–275 (GVAMNPVDHPMGGGEGRSSGGRHPCSPWGMPTKGYKTRKNKTTDKFIVRKRNKR).

This sequence belongs to the universal ribosomal protein uL2 family. As to quaternary structure, part of the 50S ribosomal subunit. Forms a bridge to the 30S subunit in the 70S ribosome.

One of the primary rRNA binding proteins. Required for association of the 30S and 50S subunits to form the 70S ribosome, for tRNA binding and peptide bond formation. It has been suggested to have peptidyltransferase activity; this is somewhat controversial. Makes several contacts with the 16S rRNA in the 70S ribosome. The polypeptide is Large ribosomal subunit protein uL2 (Desulfatibacillum aliphaticivorans).